We begin with the raw amino-acid sequence, 344 residues long: Nuclear distribution protein nudE-like 1-A (344 aa).

Residues 26-187 are a coiled coil; sequence YKKSYKEAQE…RQELAVRDTR (162 aa). Basic and acidic residues predominate over residues 181-190; that stretch reads LAVRDTRSEV. 2 disordered regions span residues 181 to 209 and 322 to 344; these read LAVR…TDSA and PGDG…VLSV.

Belongs to the nudE family. Post-translationally, phosphorylated in mitosis.

The protein resides in the cytoplasm. The protein localises to the cytoskeleton. Its subcellular location is the microtubule organizing center. It localises to the centrosome. It is found in the spindle. Required for organization of the cellular microtubule array and microtubule anchoring at the centrosome. Positively regulates the activity of the minus-end directed microtubule motor protein dynein. May enhance dynein-mediated microtubule sliding by targeting dynein to the microtubule plus end. This chain is Nuclear distribution protein nudE-like 1-A (ndel1a), found in Danio rerio (Zebrafish).